The following is a 714-amino-acid chain: Calpain-1 catalytic subunit (714 aa).

In terms of domain architecture, Calpain catalytic spans 55-354; sequence LFRDEAFPPV…FTRLEICNLT (300 aa). Ca(2+) contacts are provided by Q109 and D114. Residues C115, H272, and N296 contribute to the active site. Ca(2+)-binding residues include N316, D318, and D323. A Phosphothreonine modification is found at T354. The tract at residues 355–526 is domain III; sequence PDALKSRTIR…KSAGTAELDD (172 aa). The interval 527–542 is linker; that stretch reads QIQANLPDEQVLSEEE. EF-hand domains follow at residues 541 to 576, 585 to 618, 615 to 650, and 680 to 714; these read EEID…IISK, FSLE…NRIR, NRIR…AGFK, and VRLE…TMFA. Residues 543 to 713 are domain IV; sequence IDENFKALFR…LFKWLQLTMF (171 aa). Residues D598, D600, N602, K604, E609, D628, D630, S632, S634, and E639 each coordinate Ca(2+).

The protein belongs to the peptidase C2 family. In terms of assembly, forms a heterodimer with a small (regulatory) subunit CAPNS1. Ca(2+) is required as a cofactor. Post-translationally, undergoes calcium-induced successive autoproteolytic cleavages that generate a membrane-bound 78 kDa active form and an intracellular 75 kDa active form. Calpastatin reduces with high efficiency the transition from 78 kDa to 75 kDa calpain forms.

Its subcellular location is the cytoplasm. It is found in the cell membrane. It carries out the reaction Broad endopeptidase specificity.. Activated by micromolar concentrations of calcium and inhibited by calpastatin. Functionally, calcium-regulated non-lysosomal thiol-protease which catalyzes limited proteolysis of substrates involved in cytoskeletal remodeling and signal transduction. Proteolytically cleaves CTBP1. Cleaves and activates caspase-7 (CASP7). This chain is Calpain-1 catalytic subunit, found in Pongo abelii (Sumatran orangutan).